The sequence spans 336 residues: Zinc-type alcohol dehydrogenase-like protein SE_1777 (336 aa).

This sequence belongs to the zinc-containing alcohol dehydrogenase family. Quinone oxidoreductase subfamily.

In Staphylococcus epidermidis (strain ATCC 12228 / FDA PCI 1200), this protein is Zinc-type alcohol dehydrogenase-like protein SE_1777.